A 96-amino-acid chain; its full sequence is Large ribosomal subunit protein bL28 (96 aa).

A compositionally biased stretch (polar residues) spans 1-22; the sequence is MSRSCELTGKGVQSGNNVSHAN. Residues 1 to 24 form a disordered region; the sequence is MSRSCELTGKGVQSGNNVSHANNK.

Belongs to the bacterial ribosomal protein bL28 family.

The sequence is that of Large ribosomal subunit protein bL28 from Sinorhizobium medicae (strain WSM419) (Ensifer medicae).